Reading from the N-terminus, the 315-residue chain is WD repeat domain-containing protein 83 (315 aa).

7 WD repeats span residues 23–62 (CSQGAVRAVRFNVDGNYCLTCGSDKTLKLWNPLRGTLLRT), 65–104 (GHGYEVLDAAGSFDNSHLCSGGGDKTVVLWDVATGQVVRK), 107–146 (GHAGKVNTVQFNEEATVILSGSIDSSVRCWDCRSRKPEPV), 151–188 (EARDGISSVKVSDHEILAGSVDGRVRRYDLRMGQVSSD), 190–228 (VGSPITCTCFSRDGQCTLISSLDSTLRLLDKDTGELLGE), 231–272 (GHKN…LALA), and 275–313 (VGSNVVQSLAYHPTEPCLLTAMGGSIQYWREETYEAEGG).

Belongs to the WD repeat MORG1 family. Interacts with EGLN3/PHD3. Interacts with ERK signaling proteins MAP2K1/MEK1, MAP2K2/MEK2, LAMTOR3, ARAF/Raf-1, MAPK1/ERK2 and MAPK3/ERK1. Identified in the spliceosome C complex. Interacts with PARD6B and CRB3. Interacts strongly with GTP-bound RRAGA but not with inactive GDP-bound. Interacts with p62/SQSTM1. As to expression, ubiquitous.

It is found in the cytoplasm. It localises to the lysosome. The protein localises to the nucleus. Molecular scaffold protein for various multimeric protein complexes. Acts as a module in the assembly of a multicomponent scaffold for the ERK pathway, linking ERK responses to specific agonists. At low concentrations it enhances ERK activation, whereas high concentrations lead to the inhibition of ERK activation. Also involved in response to hypoxia by acting as a negative regulator of HIF1A/HIF-1-alpha via its interaction with EGLN3/PHD3. May promote degradation of HIF1A. May act by recruiting signaling complexes to a specific upstream activator. May also be involved in pre-mRNA splicing. Participates in tight junction development by regulating apico-basal polarity, a key step in tissue development and organization. Mechanistically, regulates the translocation of PAR6-aPKC from the cytoplasm to the apical surface by acting as an adapter between PARD6B AND CRB3. Also acts as a negative regulator of mTORC1 under nutrient-rich conditions by binding to the active Rag GTPases to inhibit mTORC1 localization to the lysosome and phosphorylation of downstream targets. This facilitates constitutive basal autophagy during nutrient availability. The sequence is that of WD repeat domain-containing protein 83 (Wdr83) from Mus musculus (Mouse).